The sequence spans 146 residues: Catabolic 3-dehydroquinase (146 aa).

Tyrosine 24 functions as the Proton acceptor in the catalytic mechanism. Residues asparagine 78, histidine 84, and aspartate 91 each coordinate substrate. Histidine 104 acts as the Proton donor in catalysis. Residues 105 to 106 (IT) and arginine 115 contribute to the substrate site.

It belongs to the type-II 3-dehydroquinase family. In terms of assembly, homododecamer. Adopts a ring-like structure, composed of an arrangement of two hexameric rings stacked on top of one another.

It carries out the reaction 3-dehydroquinate = 3-dehydroshikimate + H2O. It participates in aromatic compound metabolism; 3,4-dihydroxybenzoate biosynthesis; 3,4-dihydroxybenzoate from 3-dehydroquinate: step 1/2. Functionally, is involved in the catabolism of quinate. Allows the utilization of quinate as carbon source via the beta-ketoadipate pathway. The chain is Catabolic 3-dehydroquinase from Scheffersomyces stipitis (strain ATCC 58785 / CBS 6054 / NBRC 10063 / NRRL Y-11545) (Yeast).